The primary structure comprises 967 residues: Phosphoenolpyruvate carboxylase (967 aa).

At Ser-10 the chain carries Phosphoserine. Active-site residues include His-171 and Lys-601. Residues 915–936 (NASRLPLSRESPEATKPADELV) form a disordered region. The segment covering 924–933 (ESPEATKPAD) has biased composition (basic and acidic residues).

Belongs to the PEPCase type 1 family. In terms of assembly, homotetramer. The cofactor is Mg(2+).

The protein localises to the cytoplasm. It catalyses the reaction oxaloacetate + phosphate = phosphoenolpyruvate + hydrogencarbonate. By light-reversible phosphorylation. Functionally, through the carboxylation of phosphoenolpyruvate (PEP) it forms oxaloacetate, a four-carbon dicarboxylic acid source for the tricarboxylic acid cycle. This is Phosphoenolpyruvate carboxylase from Pisum sativum (Garden pea).